Consider the following 152-residue polypeptide: NADH-ubiquinone oxidoreductase chain 4 (152 aa).

Transmembrane regions (helical) follow at residues 2-22, 43-63, 84-104, and 128-148; these read FSGA…YFCL, ILLP…LALP, ITIV…LHMF, and MLMF…NIIL.

This sequence belongs to the complex I subunit 4 family.

The protein localises to the mitochondrion membrane. It catalyses the reaction a ubiquinone + NADH + 5 H(+)(in) = a ubiquinol + NAD(+) + 4 H(+)(out). Core subunit of the mitochondrial membrane respiratory chain NADH dehydrogenase (Complex I) that is believed to belong to the minimal assembly required for catalysis. Complex I functions in the transfer of electrons from NADH to the respiratory chain. The immediate electron acceptor for the enzyme is believed to be ubiquinone. This Macaca fascicularis (Crab-eating macaque) protein is NADH-ubiquinone oxidoreductase chain 4 (MT-ND4).